Reading from the N-terminus, the 635-residue chain is Probable ethylene response sensor 2 (635 aa).

3 consecutive transmembrane segments (helical) span residues 24–44 (ISDF…IYFV), 59–79 (FGAF…TFAI), and 94–114 (ATAV…PDLL). Cu cation is bound by residues C66 and H70. The 150-residue stretch at 159 to 308 (DRHTILRTTL…VVADQVAVAL (150 aa)) folds into the GAF domain. The Histidine kinase domain maps to 351 to 589 (VMNHEMRTPM…MFFVKLGMPE (239 aa)). H354 is modified (phosphohistidine; by autocatalysis).

It belongs to the ethylene receptor family. In terms of assembly, homodimer. The cofactor is Cu cation.

The protein localises to the endoplasmic reticulum membrane. The catalysed reaction is ATP + protein L-histidine = ADP + protein N-phospho-L-histidine.. Ethylene receptor related to bacterial two-component regulators. Acts as a negative regulator of ethylene signaling. May play a role in the regulation of flowering by up-regulating GI (GIGANTEA) and RCN1 and regulate starch accumulation by down-regulating the alpha-amylase AMY3D. The polypeptide is Probable ethylene response sensor 2 (ERS2) (Oryza sativa subsp. japonica (Rice)).